Consider the following 281-residue polypeptide: Putative phosphatase/phosphodiesterase MPN_349 (281 aa).

Fe cation is bound by residues Asp-12, Glu-43, Asn-44, and Asn-71. The active-site Proton donor is the His-72. 3 residues coordinate Fe cation: His-158, His-183, and His-185.

The protein belongs to the YmdB-like family. It depends on Fe(3+) as a cofactor.

The protein is Putative phosphatase/phosphodiesterase MPN_349 of Mycoplasma pneumoniae (strain ATCC 29342 / M129 / Subtype 1) (Mycoplasmoides pneumoniae).